Reading from the N-terminus, the 274-residue chain is NADPH-dependent 7-cyano-7-deazaguanine reductase (274 aa).

80-82 (VES) is a binding site for substrate. 82 to 83 (SK) is an NADPH binding site. Cys-181 serves as the catalytic Thioimide intermediate. The Proton donor role is filled by Asp-188. 220 to 221 (HE) contacts substrate. 249–250 (RG) contributes to the NADPH binding site.

This sequence belongs to the GTP cyclohydrolase I family. QueF type 2 subfamily. As to quaternary structure, homodimer.

Its subcellular location is the cytoplasm. It carries out the reaction 7-aminomethyl-7-carbaguanine + 2 NADP(+) = 7-cyano-7-deazaguanine + 2 NADPH + 3 H(+). It functions in the pathway tRNA modification; tRNA-queuosine biosynthesis. Catalyzes the NADPH-dependent reduction of 7-cyano-7-deazaguanine (preQ0) to 7-aminomethyl-7-deazaguanine (preQ1). This is NADPH-dependent 7-cyano-7-deazaguanine reductase from Burkholderia multivorans (strain ATCC 17616 / 249).